A 674-amino-acid chain; its full sequence is Translation initiation factor IF-2 (674 aa).

The region spanning 174–344 (IRPPVVTVMG…LLVAELREIK (171 aa)) is the tr-type G domain. The tract at residues 183 to 190 (GHVDHGKT) is G1. 183–190 (GHVDHGKT) serves as a coordination point for GTP. Residues 208-212 (GITQS) are G2. The interval 229–232 (DTPG) is G3. GTP contacts are provided by residues 229–233 (DTPGH) and 283–286 (NKID). The G4 stretch occupies residues 283 to 286 (NKID). The tract at residues 320–322 (SAR) is G5.

It belongs to the TRAFAC class translation factor GTPase superfamily. Classic translation factor GTPase family. IF-2 subfamily.

Its subcellular location is the cytoplasm. In terms of biological role, one of the essential components for the initiation of protein synthesis. Protects formylmethionyl-tRNA from spontaneous hydrolysis and promotes its binding to the 30S ribosomal subunits. Also involved in the hydrolysis of GTP during the formation of the 70S ribosomal complex. This Pseudothermotoga lettingae (strain ATCC BAA-301 / DSM 14385 / NBRC 107922 / TMO) (Thermotoga lettingae) protein is Translation initiation factor IF-2.